Consider the following 118-residue polypeptide: uncharacterized protein (118 aa).

The first 18 residues, 1 to 18 (MSKLIFLFVVATLATIKA), serve as a signal peptide directing secretion. Residue Asn24 is glycosylated (N-linked (GlcNAc...) asparagine; by host).

This is an uncharacterized protein from Magallana gigas (Pacific oyster).